The sequence spans 168 residues: Peptidyl-prolyl cis-trans isomerase-like 3 (168 aa).

Positions 1–156 (MSVTLHTNVG…SEIRMTGVTV (156 aa)) constitute a PPIase cyclophilin-type domain.

This sequence belongs to the cyclophilin-type PPIase family. PPIL3 subfamily.

It carries out the reaction [protein]-peptidylproline (omega=180) = [protein]-peptidylproline (omega=0). Its function is as follows. PPIases accelerate the folding of proteins. It catalyzes the cis-trans isomerization of proline imidic peptide bonds in oligopeptides. The polypeptide is Peptidyl-prolyl cis-trans isomerase-like 3 (CYP10) (Mycosarcoma maydis (Corn smut fungus)).